The primary structure comprises 404 residues: Cysteine desulfurase IscS (404 aa).

Residues 75 to 76, N155, Q183, and 203 to 205 contribute to the pyridoxal 5'-phosphate site; these read AT and SSH. N6-(pyridoxal phosphate)lysine is present on K206. Pyridoxal 5'-phosphate is bound at residue T243. C328 acts as the Cysteine persulfide intermediate in catalysis. C328 contacts [2Fe-2S] cluster.

This sequence belongs to the class-V pyridoxal-phosphate-dependent aminotransferase family. NifS/IscS subfamily. Homodimer. Forms a heterotetramer with IscU, interacts with other sulfur acceptors. It depends on pyridoxal 5'-phosphate as a cofactor.

The protein resides in the cytoplasm. It catalyses the reaction (sulfur carrier)-H + L-cysteine = (sulfur carrier)-SH + L-alanine. It participates in cofactor biosynthesis; iron-sulfur cluster biosynthesis. Its function is as follows. Master enzyme that delivers sulfur to a number of partners involved in Fe-S cluster assembly, tRNA modification or cofactor biosynthesis. Catalyzes the removal of elemental sulfur atoms from cysteine to produce alanine. Functions as a sulfur delivery protein for Fe-S cluster synthesis onto IscU, an Fe-S scaffold assembly protein, as well as other S acceptor proteins. The sequence is that of Cysteine desulfurase IscS from Haemophilus influenzae (strain PittGG).